Consider the following 494-residue polypeptide: Catalase isozyme 2 (494 aa).

Residues 1–29 (MDPCKFRPSSSFDTKTTTTNAGQPVWNDN) form a disordered region. Residues 8-22 (PSSSFDTKTTTTNAG) show a composition bias toward polar residues. Catalysis depends on residues histidine 65 and asparagine 138. Tyrosine 348 contributes to the heme binding site.

Belongs to the catalase family. In terms of assembly, homotetramer. The cofactor is heme.

It localises to the peroxisome. It is found in the glyoxysome. The enzyme catalyses 2 H2O2 = O2 + 2 H2O. Functionally, occurs in almost all aerobically respiring organisms and serves to protect cells from the toxic effects of hydrogen peroxide. The polypeptide is Catalase isozyme 2 (CAT2) (Hordeum vulgare (Barley)).